Consider the following 1493-residue polypeptide: DNA excision repair protein ERCC-6 (1493 aa).

Residues 1 to 39 (MPNEGIPHSSQTQEQDCLQSQPVSNNEEMAIKQESGGDG) form a disordered region. The tract at residues 1–510 (MPNEGIPHSS…GFLFKKLFKY (510 aa)) is N-terminal domain; essential for its chromatin remodeling activity. A compositionally biased stretch (polar residues) spans 8–27 (HSSQTQEQDCLQSQPVSNNE). At Ser10 the chain carries Phosphoserine; by ATM. Phosphoserine; by CDK2 is present on Ser158. An N6-methylated lysine; by EHMT2 modification is found at Lys170. Residue Lys205 forms a Glycyl lysine isopeptide (Lys-Gly) (interchain with G-Cter in SUMO3) linkage. Lys255 participates in a covalent cross-link: Glycyl lysine isopeptide (Lys-Gly) (interchain with G-Cter in SUMO2). Disordered regions lie at residues 287 to 323 (KQGCNKRAARKAPAPVTPPAPVQNKNKPNKKARVLSK) and 344 to 453 (GKVG…GRYR). Lys297 bears the N6-methylated lysine; by EHMT2 mark. Residues 353–363 (RPWESDMRPEA) are compositionally biased toward basic and acidic residues. Positions 364 to 392 (EGDSEGEESEYFPTEEEEEEEDDEVEGAE) are enriched in acidic residues. 2 positions are modified to phosphoserine: Ser429 and Ser430. An N6-methylated lysine; by EHMT2 modification is found at Lys448. 2 positions are modified to phosphoserine: Ser486 and Ser489. The Helicase ATP-binding domain maps to 519-695 (WELHCQQAGG…WSLFDFIFPG (177 aa)). Residue 532–539 (DEMGLGKT) coordinates ATP. The DEAH box signature appears at 646–649 (DEGH). The Helicase C-terminal domain occupies 843-1002 (VVESLLKIWH…RRFFKSNDLY (160 aa)). Disordered regions lie at residues 1042 to 1147 (PAFG…DESI), 1181 to 1247 (HKSK…EQSN), and 1318 to 1384 (RGIS…SGPL). Lys1054 carries the post-translational modification N6-methylated lysine; by EHMT2. Positions 1123-1141 (ISGNGECSNSSGTGKTSMP) are enriched in polar residues. Phosphoserine is present on Ser1142. Over residues 1200-1210 (LRPKQKPKNSK) the composition is skewed to basic residues. Composition is skewed to basic and acidic residues over residues 1211-1221 (HCRDAKFEGTR) and 1232-1247 (QKQDSENKSEAKEQSN). The span at 1327 to 1336 (KKSRFGKKRN) shows a compositional bias: basic residues. The segment covering 1337–1351 (SNFSVQHPSSTSPTE) has biased composition (polar residues). Ser1348 carries the post-translational modification Phosphoserine. Residues 1352–1376 (KCQDGIMKKEGKDNVPEHFSGRAED) are compositionally biased toward basic and acidic residues. A CSA-interacting motif (CIM) motif is present at residues 1386–1398 (SSSLLAKMRARNH). The tract at residues 1400-1428 (ILPERLESESGHLQEASALLPTTEHDDLL) is ubiquitin-binding domain (UBD). The tract at residues 1429–1493 (VEMRNFIAFQ…GIWKLKPEYC (65 aa)) is winged-helix domain (WHD). Residues 1446–1493 (STREILQEFESKLSASQSCVFRELLRNLCTFHRTSGGEGIWKLKPEYC) form an essential for its interaction with RNA polymerase II, transcription-coupled nucleotide excision repair activity, association with chromatin after UV irradiation and for mediating the UV-induced translocation of ERRC8 to the nuclear matrix region.

It belongs to the SNF2/RAD54 helicase family. As to quaternary structure, homodimer. Binds DNA. Interacts with ERCC8. Interacts with RNA polymerase II; interaction is enhanced by UV irradiation. Component of the B-WICH complex, at least composed of SMARCA5/SNF2H, BAZ1B/WSTF, SF3B1, DEK, MYO1C, ERCC6, MYBBP1A and DDX21. Interacts with KIAA1530/UVSSA. Interacts with ELOA and CUL5; the interaction is induced by DNA damaging agents or by inhibitors of RNA polymerase II elongation. Interacts (via WHD region) with RIF1. Interacts with SMARCC2/BAF170, SMARCB1/BAF47 and the neuron-specific chromatin remodeling complex (nBAF complex). Interacts with ERCC5/XPG (via C-terminus); the interaction stimulates ERCC6/CSB binding to the DNA repair bubble and ERCC6/CSB ATPase activity. May form a complex composed of RNA polymerase II, ERCC6/CSB and ERCC5/XPG which associates with the DNA repair bubble during transcription-coupled nucleotide excision repair. Interacts with CAND1, CSTF1, DDX3X, DDX5, DDX17, DDX23, DHX36, HDAC1, HNRNPU, MTA2, PRPF3, PSMD3, RBBP4, SFPQ, SMARCA1, SMARCA2, TOP1, USP7, XRCC5, COPS3, COPS4, COPS6, DDX1, DDX41, GATAD2A, GATAD2B, PRPF4, PSMC5, SF3B2, CTR9, NONO, PSMD12 and TOP2A. Phosphorylated in a cell cycle-dependent manner at Ser-158 by cyclin A-CDK2 and at Ser-10 by ATM in response to DNA damage. Phosphorylation at these two sites promotes the intramolecular interaction of the N-terminal domain with the helicase ATP-binding domain, thereby probably releasing the inhibitory effect of the N-terminal domain on its ATPase activity. Phosphorylation is essential for its chromatin remodeling activity. Post-translationally, ubiquitinated at the C-terminus. Ubiquitination by the CSA complex leads to ERCC6 proteasomal degradation in a UV-dependent manner. Stabilized following interaction with KIAA1530/UVSSA, which promotes recruitment of deubiquitinating enzyme USP7, leading to deubiquitination of ERCC6 thereby preventing UV-induced degradation of ERCC6 by the proteasome. In terms of processing, sumoylation at Lys-205 in an UV-radiation-dependent manner is essential for its transcription-coupled nucleotide excision repair activity.

Its subcellular location is the nucleus. It localises to the chromosome. It carries out the reaction ATP + H2O = ADP + phosphate + H(+). In terms of biological role, essential factor involved in transcription-coupled nucleotide excision repair (TC-NER), a process during which RNA polymerase II-blocking lesions are rapidly removed from the transcribed strand of active genes. Plays a central role in the initiation of the TC-NER process: specifically recognizes and binds RNA polymerase II stalled at a lesion, and mediates recruitment of ERCC8/CSA, initiating DNA damage excision by TFIIH recruitment. Upon DNA-binding, it locally modifies DNA conformation by wrapping the DNA around itself, thereby modifying the interface between stalled RNA polymerase II and DNA. Acts as a chromatin remodeler at DSBs; DNA-dependent ATPase-dependent activity is essential for this function. Plays an important role in regulating the choice of the DNA double-strand breaks (DSBs) repair pathway and G2/M checkpoint activation; DNA-dependent ATPase activity is essential for this function. Regulates the DNA repair pathway choice by inhibiting non-homologous end joining (NHEJ), thereby promoting the homologous recombination (HR)-mediated repair of DSBs during the S/G2 phases of the cell cycle. Mediates the activation of the ATM- and CHEK2-dependent DNA damage responses thus preventing premature entry of cells into mitosis following the induction of DNA DSBs. Remodels chromatin by evicting histones from chromatin flanking DSBs, limiting RIF1 accumulation at DSBs thereby promoting BRCA1-mediated HR. Required for stable recruitment of ELOA and CUL5 to DNA damage sites. Also involved in UV-induced translocation of ERCC8 to the nuclear matrix. Essential for neuronal differentiation and neuritogenesis; regulates transcription and chromatin remodeling activities required during neurogenesis. In Homo sapiens (Human), this protein is DNA excision repair protein ERCC-6.